Reading from the N-terminus, the 169-residue chain is Ribosome maturation factor RimM (169 aa).

The PRC barrel domain occupies 94–167 (ENEFYFHEII…KITIEVMEGL (74 aa)).

It belongs to the RimM family. In terms of assembly, binds ribosomal protein uS19.

Its subcellular location is the cytoplasm. In terms of biological role, an accessory protein needed during the final step in the assembly of 30S ribosomal subunit, possibly for assembly of the head region. Essential for efficient processing of 16S rRNA. May be needed both before and after RbfA during the maturation of 16S rRNA. It has affinity for free ribosomal 30S subunits but not for 70S ribosomes. In Listeria welshimeri serovar 6b (strain ATCC 35897 / DSM 20650 / CCUG 15529 / CIP 8149 / NCTC 11857 / SLCC 5334 / V8), this protein is Ribosome maturation factor RimM.